The following is a 301-amino-acid chain: MKWLQIHITVDQEQVEFTETLLMSLGAVSVTLDDAEDQALLEPLPGETPLWNKVIVTGIYQQDEQDPIDVDTLEAFLKAQLPDVPMRHEELEDQVWERAWMDYYEPIQIGEKFWIVPEWLEPPEADATNIKLDPGLAFGTGNHASTFLCLQWLGKTDVKNKIVIDYGCGSGILGVAALLLGAKKVYATDIDPQAVLATKQNAELNGVLDRLYVGLPEEFDQEFKPQQADVLVANILAGPLMALAPEFAKLLKSDGDFALAGVIEEQVVDVSGVYSEFFDILDVEKREENWCRISGKRKTTN.

S-adenosyl-L-methionine-binding residues include threonine 146, glycine 167, aspartate 189, and asparagine 234.

Belongs to the methyltransferase superfamily. PrmA family.

It localises to the cytoplasm. It carries out the reaction L-lysyl-[protein] + 3 S-adenosyl-L-methionine = N(6),N(6),N(6)-trimethyl-L-lysyl-[protein] + 3 S-adenosyl-L-homocysteine + 3 H(+). In terms of biological role, methylates ribosomal protein L11. The chain is Ribosomal protein L11 methyltransferase from Acinetobacter baumannii (strain SDF).